Here is a 677-residue protein sequence, read N- to C-terminus: Amine oxidase [copper-containing] alpha 2, peroxisomal (677 aa).

320-331 (YLDCGEFGCGQT) contributes to the substrate binding site. Residue aspartate 322 is the Proton acceptor of the active site. Cysteines 341 and 367 form a disulfide. Position 407–412 (407–412 (VGNYDY)) interacts with substrate. Tyrosine 410 serves as the catalytic Schiff-base intermediate with substrate; via topaquinone. Position 410 is a 2',4',5'-topaquinone (tyrosine 410). Cu cation contacts are provided by histidine 466 and histidine 468. Residues aspartate 477, aspartate 617, and isoleucine 618 each coordinate Mn(2+). Histidine 628 provides a ligand contact to Cu cation.

Belongs to the copper/topaquinone oxidase family. In terms of assembly, homodimer. Cu cation is required as a cofactor. Requires Zn(2+) as cofactor. It depends on L-topaquinone as a cofactor. Post-translationally, topaquinone (TPQ) is generated by copper-dependent autoxidation of a specific tyrosyl residue. As to expression, expressed exclusively in leaves.

The protein localises to the peroxisome. The catalysed reaction is a primary methyl amine + O2 + H2O = an aldehyde + H2O2 + NH4(+). It participates in amine and polyamine degradation; putrescine degradation. Copper amine oxidase that can use putrescine and spermidine as substrates. Involved in putrescine catabolism in peroxisomes in response to salt stress. Regulates arginine-dependent nitric oxide (NO) production, a key signaling molecule regulating a wide range of physiological processes including responses to salt stress, by influencing arginine bioavailability. Modulates primary root growth. The chain is Amine oxidase [copper-containing] alpha 2, peroxisomal from Arabidopsis thaliana (Mouse-ear cress).